The following is a 1170-amino-acid chain: Thrombospondin-2 (1170 aa).

The first 18 residues, Met1–Ala18, serve as a signal peptide directing secretion. In terms of domain architecture, Laminin G-like spans Gly19–Asn215. The tract at residues Gly19 to Ala232 is heparin-binding. Residues Asn151, Asn316, and Asn330 are each glycosylated (N-linked (GlcNAc...) asparagine). The 58-residue stretch at Ser318–Val375 folds into the VWFC domain. 3 TSP type-1 domains span residues Glu379–Asp429, Asp435–Pro490, and Asp492–Pro547. Disulfide bonds link Cys391-Cys423, Cys395-Cys428, Cys406-Cys413, Cys447-Cys484, Cys451-Cys489, Cys462-Cys474, Cys504-Cys541, Cys508-Cys546, Cys519-Cys531, Cys551-Cys562, Cys556-Cys572, Cys575-Cys586, Cys592-Cys608, Cys599-Cys617, Cys620-Cys644, Cys650-Cys663, Cys657-Cys676, Cys678-Cys689, Cys705-Cys713, Cys718-Cys738, Cys754-Cys774, Cys777-Cys797, Cys813-Cys833, Cys836-Cys856, Cys874-Cys894, and Cys910-Cys930. The N-linked (GlcNAc...) asparagine glycan is linked to Asn455. In terms of domain architecture, EGF-like 1 spans Pro547–Glu587. Residue Asn582 is glycosylated (N-linked (GlcNAc...) asparagine). The 45-residue stretch at Pro646–Gly690 folds into the EGF-like 2 domain. 8 TSP type-3 repeats span residues Glu691–Gln726, Glu727–Gln762, Phe763–Gln785, Ile786–Gln821, Arg822–Gln844, Thr845–Gln882, Ala883–Gln918, and Glu919–Glu954. The N-linked (GlcNAc...) asparagine glycan is linked to Asn708. Positions Lys731 to Glu750 are disordered. A compositionally biased stretch (acidic residues) spans Ala737 to Val747. The segment at Asn841–Asp944 is disordered. Composition is skewed to acidic residues over residues Thr845 to Glu864 and Cys894 to Ile903. The span at Gly923–Asp933 shows a compositional bias: basic and acidic residues. The Cell attachment site signature appears at Arg926–Asp928. Over residues Phe934–Asp944 the composition is skewed to acidic residues. Residues Asn936 and Asn1067 are each glycosylated (N-linked (GlcNAc...) asparagine). An intrachain disulfide couples Cys946 to Cys1167. Positions Arg958–Val1170 constitute a TSP C-terminal domain.

The protein belongs to the thrombospondin family. As to quaternary structure, homotrimer; disulfide-linked. Can bind to fibrinogen, fibronectin, laminin and type V collagen. Interacts (via the TSP type I repeats) with CD36; the interaction conveys an antiangiogenic effect. Interacts (via the TSP type I repeats) with HRG; the interaction blocks the antiangiogenic effect of THBS2 with CD36.

Its function is as follows. Adhesive glycoprotein that mediates cell-to-cell and cell-to-matrix interactions. Ligand for CD36 mediating antiangiogenic properties. In Bos taurus (Bovine), this protein is Thrombospondin-2 (THBS2).